Consider the following 681-residue polypeptide: Elongation factor G (681 aa).

Residues 5-279 (KNIRNIGIIA…SIVNFLPSPI (275 aa)) enclose the tr-type G domain. Residues 14-21 (AHVDAGKT), 82-86 (DTPGH), and 136-139 (NKLD) each bind GTP.

It belongs to the TRAFAC class translation factor GTPase superfamily. Classic translation factor GTPase family. EF-G/EF-2 subfamily.

The protein localises to the cytoplasm. In terms of biological role, catalyzes the GTP-dependent ribosomal translocation step during translation elongation. During this step, the ribosome changes from the pre-translocational (PRE) to the post-translocational (POST) state as the newly formed A-site-bound peptidyl-tRNA and P-site-bound deacylated tRNA move to the P and E sites, respectively. Catalyzes the coordinated movement of the two tRNA molecules, the mRNA and conformational changes in the ribosome. The polypeptide is Elongation factor G (Carsonella ruddii (strain PV)).